We begin with the raw amino-acid sequence, 320 residues long: Olfactory receptor 2C3 (320 aa).

Topologically, residues 1–26 (MMEIANVSSPEVFVLLGFSTRPSLET) are extracellular. N-linked (GlcNAc...) asparagine glycosylation occurs at N6. A helical membrane pass occupies residues 27 to 50 (VLFIVVLSFYMVSILGNGIIILVS). Topologically, residues 51 to 58 (HTDVHLHT) are cytoplasmic. The chain crosses the membrane as a helical span at residues 59–80 (PMYFFLANLPFLDMSFTTSIVP). The Extracellular portion of the chain corresponds to 81 to 101 (QLLANLWGPQKTISYGGCVVQ). A disulfide bridge connects residues C98 and C190. The chain crosses the membrane as a helical span at residues 102–121 (FYISHWLGATECVLLATMSY). Topologically, residues 122–140 (DRYAAICRPLHYTVIMHPQ) are cytoplasmic. A helical membrane pass occupies residues 141–159 (LCLGLALASWLGGLTTSMV). The Extracellular portion of the chain corresponds to 160–196 (GSTLTMLLPLCGNNCIDHFFCEMPLIMQLACVDTSLN). The helical transmembrane segment at 197–220 (EMEMYLASFVFVVLPLGLILVSYG) threads the bilayer. Topologically, residues 221 to 237 (HIARAVLKIRSAEGRRK) are cytoplasmic. The helical transmembrane segment at 238 to 260 (AFNTCSSHVAVVSLFYGSIIFMY) threads the bilayer. The Extracellular portion of the chain corresponds to 261 to 273 (LQPAKSTSHEQGK). The chain crosses the membrane as a helical span at residues 274-293 (FIALFYTVVTPALNPLIYTL). Over 294 to 320 (RNTEVKSALRHMVLENCCGSAGKLAQI) the chain is Cytoplasmic.

The protein belongs to the G-protein coupled receptor 1 family.

It localises to the cell membrane. Functionally, odorant receptor. The protein is Olfactory receptor 2C3 (OR2C3) of Homo sapiens (Human).